Here is a 779-residue protein sequence, read N- to C-terminus: ATP-dependent RNA helicase SUPV3L1, mitochondrial (779 aa).

A mitochondrion-targeting transit peptide spans 1 to 40; it reads MSLPRCTLLWARLPAGRGAGPRAAPCSALRALVGSFPGAS. The residue at position 99 (K99) is an N6-acetyllysine. Residues 194–334 form the Helicase ATP-binding domain; that stretch reads EARARQRKII…AINLVSELLY (141 aa). 207-214 is a binding site for ATP; that stretch reads GPTNSGKT. The 169-residue stretch at 353 to 521 folds into the Helicase C-terminal domain; sequence VLDHALESLD…PTAEQIEMFA (169 aa). An interaction with LAMTOR5, important for protein stability region spans residues 650-779; that stretch reads PDSSLVRSLQ…RRKKKDPDSD (130 aa). Over residues 693-703 the composition is skewed to polar residues; sequence SGDQSRLSGAS. Disordered stretches follow at residues 693-732 and 754-779; these read SGDQSRLSGASKSPARRTRGTKSAGNKATEPLSPSDKELP and EWLTQQPEHSREKVGTRRKKKDPDSD. Residue S725 is modified to Phosphoserine. Basic and acidic residues predominate over residues 761-779; the sequence is EHSREKVGTRRKKKDPDSD.

The protein belongs to the helicase family. As to quaternary structure, homodimer; in free form. Component of the mitochondrial degradosome (mtEXO) complex which is a heteropentamer containing 2 copies of SUPV3L1 and 3 copies of PNPT1. As part of mitochondrial degradosome complex, interacts with GRSF1 in a RNA-dependent manner; the interaction enhances the activity of the complex. Interacts with LAMTOR5/HBXIP, WRN and BLM. Mg(2+) serves as cofactor. It depends on Mn(2+) as a cofactor.

Its subcellular location is the nucleus. The protein resides in the mitochondrion matrix. It localises to the mitochondrion nucleoid. The enzyme catalyses ATP + H2O = ADP + phosphate + H(+). Helicase activity toward DNA substrate is inhibited by micromolar concentrations of 5,6-dichloro-1-(beta-D-ribofuranosyl)benzotriazole (DRBT) and 4,5,6,7-tetrabromobenzotriazole (TBBT). Helicase activity toward RNA substrate is inhibited by elevated concentrations of TBBT. Inhibited by some ring-expanded nucleoside analogs. In terms of biological role, major helicase player in mitochondrial RNA metabolism. Component of the mitochondrial degradosome (mtEXO) complex, that degrades 3' overhang double-stranded RNA with a 3'-to-5' directionality in an ATP-dependent manner. Involved in the degradation of non-coding mitochondrial transcripts (MT-ncRNA) and tRNA-like molecules. ATPase and ATP-dependent multisubstrate helicase, able to unwind double-stranded (ds) DNA and RNA, and RNA/DNA heteroduplexes in the 5'-to-3' direction. Plays a role in the RNA surveillance system in mitochondria; regulates the stability of mature mRNAs, the removal of aberrantly formed mRNAs and the rapid degradation of non coding processing intermediates. Also implicated in recombination and chromatin maintenance pathways. May protect cells from apoptosis. Associates with mitochondrial DNA. This chain is ATP-dependent RNA helicase SUPV3L1, mitochondrial (Supv3l1), found in Mus musculus (Mouse).